A 74-amino-acid polypeptide reads, in one-letter code: Translation initiation factor IF-1 (74 aa).

Residues 1–72 enclose the S1-like domain; it reads MADTEKLKML…TRGRITYRHR (72 aa).

This sequence belongs to the IF-1 family. Component of the 30S ribosomal translation pre-initiation complex which assembles on the 30S ribosome in the order IF-2 and IF-3, IF-1 and N-formylmethionyl-tRNA(fMet); mRNA recruitment can occur at any time during PIC assembly.

The protein resides in the cytoplasm. In terms of biological role, one of the essential components for the initiation of protein synthesis. Stabilizes the binding of IF-2 and IF-3 on the 30S subunit to which N-formylmethionyl-tRNA(fMet) subsequently binds. Helps modulate mRNA selection, yielding the 30S pre-initiation complex (PIC). Upon addition of the 50S ribosomal subunit IF-1, IF-2 and IF-3 are released leaving the mature 70S translation initiation complex. This is Translation initiation factor IF-1 from Ureaplasma parvum serovar 3 (strain ATCC 700970).